A 419-amino-acid chain; its full sequence is 3-isopropylmalate dehydratase large subunit (419 aa).

C300, C360, and C363 together coordinate [4Fe-4S] cluster.

It belongs to the aconitase/IPM isomerase family. LeuC type 2 subfamily. Heterodimer of LeuC and LeuD. [4Fe-4S] cluster is required as a cofactor.

It catalyses the reaction (2R,3S)-3-isopropylmalate = (2S)-2-isopropylmalate. It functions in the pathway amino-acid biosynthesis; L-leucine biosynthesis; L-leucine from 3-methyl-2-oxobutanoate: step 2/4. Functionally, catalyzes the isomerization between 2-isopropylmalate and 3-isopropylmalate, via the formation of 2-isopropylmaleate. The protein is 3-isopropylmalate dehydratase large subunit of Nitratidesulfovibrio vulgaris (strain ATCC 29579 / DSM 644 / CCUG 34227 / NCIMB 8303 / VKM B-1760 / Hildenborough) (Desulfovibrio vulgaris).